Reading from the N-terminus, the 381-residue chain is Alkanesulfonate monooxygenase (381 aa).

This sequence belongs to the SsuD family. Homotetramer.

It carries out the reaction an alkanesulfonate + FMNH2 + O2 = an aldehyde + FMN + sulfite + H2O + 2 H(+). Its function is as follows. Catalyzes the desulfonation of aliphatic sulfonates. This is Alkanesulfonate monooxygenase from Shigella flexneri.